Consider the following 236-residue polypeptide: LexA repressor (236 aa).

Positions 26–46 (FDEMKEALDLRSKSGIHRLIT) form a DNA-binding region, H-T-H motif. Active-site for autocatalytic cleavage activity residues include Ser-157 and Lys-195.

Belongs to the peptidase S24 family. In terms of assembly, homodimer.

It carries out the reaction Hydrolysis of Ala-|-Gly bond in repressor LexA.. In terms of biological role, represses a number of genes involved in the response to DNA damage (SOS response), including recA and lexA. In the presence of single-stranded DNA, RecA interacts with LexA causing an autocatalytic cleavage which disrupts the DNA-binding part of LexA, leading to derepression of the SOS regulon and eventually DNA repair. This Azorhizobium caulinodans (strain ATCC 43989 / DSM 5975 / JCM 20966 / LMG 6465 / NBRC 14845 / NCIMB 13405 / ORS 571) protein is LexA repressor.